A 363-amino-acid chain; its full sequence is 3-isopropylmalate dehydrogenase (363 aa).

Position 78–91 (G78–E91) interacts with NAD(+). Substrate contacts are provided by R99, R109, R138, and D227. Mg(2+) is bound by residues D227, D251, and D255. G285–N297 contacts NAD(+).

It belongs to the isocitrate and isopropylmalate dehydrogenases family. LeuB type 1 subfamily. Homodimer. The cofactor is Mg(2+). Requires Mn(2+) as cofactor.

Its subcellular location is the cytoplasm. The enzyme catalyses (2R,3S)-3-isopropylmalate + NAD(+) = 4-methyl-2-oxopentanoate + CO2 + NADH. It participates in amino-acid biosynthesis; L-leucine biosynthesis; L-leucine from 3-methyl-2-oxobutanoate: step 3/4. Functionally, catalyzes the oxidation of 3-carboxy-2-hydroxy-4-methylpentanoate (3-isopropylmalate) to 3-carboxy-4-methyl-2-oxopentanoate. The product decarboxylates to 4-methyl-2 oxopentanoate. This Buchnera aphidicola subsp. Schizaphis graminum (strain Sg) protein is 3-isopropylmalate dehydrogenase.